Reading from the N-terminus, the 570-residue chain is Urease subunit alpha (570 aa).

The region spanning 132-570 (GGFDSHIHYI…LPLAQRYFLF (439 aa)) is the Urease domain. Residues His-137, His-139, and Lys-220 each coordinate Ni(2+). At Lys-220 the chain carries N6-carboxylysine. His-222 is a substrate binding site. Ni(2+) is bound by residues His-249 and His-275. Catalysis depends on His-323, which acts as the Proton donor. Position 363 (Asp-363) interacts with Ni(2+).

The protein belongs to the metallo-dependent hydrolases superfamily. Urease alpha subunit family. In terms of assembly, heterotrimer of UreA (gamma), UreB (beta) and UreC (alpha) subunits. Three heterotrimers associate to form the active enzyme. It depends on Ni cation as a cofactor. In terms of processing, carboxylation allows a single lysine to coordinate two nickel ions.

Its subcellular location is the cytoplasm. The catalysed reaction is urea + 2 H2O + H(+) = hydrogencarbonate + 2 NH4(+). It participates in nitrogen metabolism; urea degradation; CO(2) and NH(3) from urea (urease route): step 1/1. This Ruegeria sp. (strain TM1040) (Silicibacter sp.) protein is Urease subunit alpha.